A 62-amino-acid polypeptide reads, in one-letter code: MKLIILLFVVAAFVTLAMGKKSLKDPLTITTAHFDHPEGLKHKIRRPYNKHEDRLIQCKIYL.

Positions 1–19 are cleaved as a signal peptide; it reads MKLIILLFVVAAFVTLAMG.

This is an uncharacterized protein from Lepidoptera (butterflies and moths).